The primary structure comprises 252 residues: Phosphoglycolate phosphatase (252 aa).

Catalysis depends on aspartate 13, which acts as the Nucleophile. Residues aspartate 13, aspartate 15, and aspartate 192 each coordinate Mg(2+).

This sequence belongs to the HAD-like hydrolase superfamily. CbbY/CbbZ/Gph/YieH family. In terms of assembly, monomer. The cofactor is Mg(2+). Requires chloride as cofactor.

It carries out the reaction 2-phosphoglycolate + H2O = glycolate + phosphate. It functions in the pathway organic acid metabolism; glycolate biosynthesis; glycolate from 2-phosphoglycolate: step 1/1. In terms of biological role, specifically catalyzes the dephosphorylation of 2-phosphoglycolate. Is involved in the dissimilation of the intracellular 2-phosphoglycolate formed during the DNA repair of 3'-phosphoglycolate ends, a major class of DNA lesions induced by oxidative stress. This is Phosphoglycolate phosphatase from Escherichia coli O157:H7.